A 404-amino-acid polypeptide reads, in one-letter code: 1-deoxy-D-xylulose 5-phosphate reductoisomerase (404 aa).

Threonine 5, glycine 6, serine 7, isoleucine 8, glycine 31, arginine 32, asparagine 33, and asparagine 121 together coordinate NADPH. Residue lysine 122 participates in 1-deoxy-D-xylulose 5-phosphate binding. Glutamate 123 is an NADPH binding site. Aspartate 147 serves as a coordination point for Mn(2+). Residues serine 148, glutamate 149, serine 185, and histidine 208 each contribute to the 1-deoxy-D-xylulose 5-phosphate site. Glutamate 149 is a binding site for Mn(2+). Glycine 214 serves as a coordination point for NADPH. 1-deoxy-D-xylulose 5-phosphate-binding residues include serine 221, asparagine 226, lysine 227, and glutamate 230. Glutamate 230 provides a ligand contact to Mn(2+).

Belongs to the DXR family. It depends on Mg(2+) as a cofactor. The cofactor is Mn(2+).

It catalyses the reaction 2-C-methyl-D-erythritol 4-phosphate + NADP(+) = 1-deoxy-D-xylulose 5-phosphate + NADPH + H(+). Its pathway is isoprenoid biosynthesis; isopentenyl diphosphate biosynthesis via DXP pathway; isopentenyl diphosphate from 1-deoxy-D-xylulose 5-phosphate: step 1/6. In terms of biological role, catalyzes the NADPH-dependent rearrangement and reduction of 1-deoxy-D-xylulose-5-phosphate (DXP) to 2-C-methyl-D-erythritol 4-phosphate (MEP). This chain is 1-deoxy-D-xylulose 5-phosphate reductoisomerase, found in Prochlorococcus marinus subsp. pastoris (strain CCMP1986 / NIES-2087 / MED4).